The sequence spans 229 residues: Glutathione S-transferase 3 (229 aa).

Ala-2 is modified (blocked amino end (Ala)). A GST N-terminal domain is found at 3 to 83; sequence AKPVLYYFNG…YIAGKYNLYG (81 aa). Glutathione is bound by residues Tyr-9, 54 to 55, and 67 to 68; these read QV and QT. Positions 85-207 constitute a GST C-terminal domain; that stretch reads DLKERALIDM…LAPGSKRKPI (123 aa).

Belongs to the GST superfamily. Alpha family. In terms of assembly, homodimer or heterodimer (with a subunit from group CL-4).

The protein localises to the cytoplasm. The enzyme catalyses RX + glutathione = an S-substituted glutathione + a halide anion + H(+). Functionally, catalyzes the conjugation of GSH to a wide variety of electrophilic alkylating agents. Also involved in the metabolism of lipid hydroperoxides, prostaglandins and leukotriene A4 and in binding of non-substrate hydrophobic ligands such as bile acids, a number of drugs and thyroid hormones. This GST does not exhibit peroxidase activity. The polypeptide is Glutathione S-transferase 3 (Gallus gallus (Chicken)).